The chain runs to 334 residues: Glycerol-3-phosphate dehydrogenase [NAD(P)+] (334 aa).

NADPH contacts are provided by Trp-13, Arg-33, and Lys-106. The sn-glycerol 3-phosphate site is built by Lys-106, Gly-137, and Ser-139. Residue Ala-141 coordinates NADPH. Sn-glycerol 3-phosphate contacts are provided by Lys-192, Asp-245, Ser-255, Arg-256, and Asn-257. The active-site Proton acceptor is Lys-192. Arg-256 contacts NADPH. 2 residues coordinate NADPH: Val-280 and Glu-282.

It belongs to the NAD-dependent glycerol-3-phosphate dehydrogenase family.

Its subcellular location is the cytoplasm. The catalysed reaction is sn-glycerol 3-phosphate + NAD(+) = dihydroxyacetone phosphate + NADH + H(+). The enzyme catalyses sn-glycerol 3-phosphate + NADP(+) = dihydroxyacetone phosphate + NADPH + H(+). The protein operates within membrane lipid metabolism; glycerophospholipid metabolism. Its function is as follows. Catalyzes the reduction of the glycolytic intermediate dihydroxyacetone phosphate (DHAP) to sn-glycerol 3-phosphate (G3P), the key precursor for phospholipid synthesis. In Chlamydia pneumoniae (Chlamydophila pneumoniae), this protein is Glycerol-3-phosphate dehydrogenase [NAD(P)+].